The sequence spans 101 residues: Phosphoribosyl-AMP cyclohydrolase (101 aa).

A Mg(2+)-binding site is contributed by Asp71. Position 72 (Cys72) interacts with Zn(2+). Mg(2+)-binding residues include Asp73 and Asp75. Zn(2+) contacts are provided by Cys88 and Cys95.

It belongs to the PRA-CH family. Homodimer. The cofactor is Mg(2+). It depends on Zn(2+) as a cofactor.

The protein localises to the cytoplasm. It catalyses the reaction 1-(5-phospho-beta-D-ribosyl)-5'-AMP + H2O = 1-(5-phospho-beta-D-ribosyl)-5-[(5-phospho-beta-D-ribosylamino)methylideneamino]imidazole-4-carboxamide. The protein operates within amino-acid biosynthesis; L-histidine biosynthesis; L-histidine from 5-phospho-alpha-D-ribose 1-diphosphate: step 3/9. Catalyzes the hydrolysis of the adenine ring of phosphoribosyl-AMP. The protein is Phosphoribosyl-AMP cyclohydrolase of Bacillus cereus (strain AH820).